The sequence spans 263 residues: Proteasome subunit alpha type-1 (263 aa).

Methionine 1 is subject to N-acetylmethionine. The residue at position 110 (serine 110) is a Phosphoserine; alternate. Serine 110 carries an O-linked (GlcNAc) serine; alternate glycan. Lysine 115 participates in a covalent cross-link: Glycyl lysine isopeptide (Lys-Gly) (interchain with G-Cter in ubiquitin). Serine 177 bears the Phosphoserine mark. Lysine 208 is covalently cross-linked (Glycyl lysine isopeptide (Lys-Gly) (interchain with G-Cter in ubiquitin)). The segment at 232-263 (FLEGLEERPQRKAQPAQPADEPAEKADEPMEH) is disordered. The span at 253–263 (PAEKADEPMEH) shows a compositional bias: basic and acidic residues.

Belongs to the peptidase T1A family. The 26S proteasome consists of a 20S proteasome core and two 19S regulatory subunits. The 20S proteasome core is a barrel-shaped complex made of 28 subunits that are arranged in four stacked rings. The two outer rings are each formed by seven alpha subunits, and the two inner rings are formed by seven beta subunits. The proteolytic activity is exerted by three beta-subunits PSMB5, PSMB6 and PSMB7. Interacts with NOTCH3. Interacts with ZFAND1.

Its subcellular location is the cytoplasm. It is found in the nucleus. In terms of biological role, component of the 20S core proteasome complex involved in the proteolytic degradation of most intracellular proteins. This complex plays numerous essential roles within the cell by associating with different regulatory particles. Associated with two 19S regulatory particles, forms the 26S proteasome and thus participates in the ATP-dependent degradation of ubiquitinated proteins. The 26S proteasome plays a key role in the maintenance of protein homeostasis by removing misfolded or damaged proteins that could impair cellular functions, and by removing proteins whose functions are no longer required. Associated with the PA200 or PA28, the 20S proteasome mediates ubiquitin-independent protein degradation. This type of proteolysis is required in several pathways including spermatogenesis (20S-PA200 complex) or generation of a subset of MHC class I-presented antigenic peptides (20S-PA28 complex). The chain is Proteasome subunit alpha type-1 from Homo sapiens (Human).